The sequence spans 239 residues: Ribonuclease 3 (239 aa).

Residues 18-141 enclose the RNase III domain; that stretch reads YTTLEKALGY…LMAGVYLEAG (124 aa). Mg(2+) is bound at residue E54. D58 is a catalytic residue. The Mg(2+) site is built by S127 and E130. E130 is a catalytic residue. Residues 168–237 enclose the DRBM domain; the sequence is DYKTALQELT…AYQALQKLKE (70 aa).

The protein belongs to the ribonuclease III family. Homodimer. It depends on Mg(2+) as a cofactor.

It localises to the cytoplasm. It carries out the reaction Endonucleolytic cleavage to 5'-phosphomonoester.. Digests double-stranded RNA. Involved in the processing of primary rRNA transcript to yield the immediate precursors to the large and small rRNAs (23S and 16S). Processes some mRNAs, and tRNAs when they are encoded in the rRNA operon. Processes pre-crRNA and tracrRNA of type II CRISPR loci if present in the organism. The sequence is that of Ribonuclease 3 from Helicobacter pylori (strain ATCC 700392 / 26695) (Campylobacter pylori).